Here is a 179-residue protein sequence, read N- to C-terminus: Large ribosomal subunit protein uL6 (179 aa).

The protein belongs to the universal ribosomal protein uL6 family. In terms of assembly, part of the 50S ribosomal subunit.

Its function is as follows. This protein binds to the 23S rRNA, and is important in its secondary structure. It is located near the subunit interface in the base of the L7/L12 stalk, and near the tRNA binding site of the peptidyltransferase center. The protein is Large ribosomal subunit protein uL6 of Streptomyces avermitilis (strain ATCC 31267 / DSM 46492 / JCM 5070 / NBRC 14893 / NCIMB 12804 / NRRL 8165 / MA-4680).